Reading from the N-terminus, the 190-residue chain is Somatotropin (190 aa).

Position 19 (His-19) interacts with Zn(2+). The cysteines at positions 52 and 163 are disulfide-linked. Ser-105 is modified (phosphoserine). Residue Glu-172 coordinates Zn(2+). Cys-180 and Cys-188 are disulfide-bonded.

This sequence belongs to the somatotropin/prolactin family.

The protein resides in the secreted. Functionally, plays an important role in growth control. Its major role in stimulating body growth is to stimulate the liver and other tissues to secrete IGF1. It stimulates both the differentiation and proliferation of myoblasts. It also stimulates amino acid uptake and protein synthesis in muscle and other tissues. This Vulpes vulpes (Red fox) protein is Somatotropin (GH1).